The following is a 418-amino-acid chain: Tyrosine--tRNA ligase (418 aa).

An L-tyrosine-binding site is contributed by Tyr34. The 'HIGH' region motif lies at 39–48 (PTADSLHLGH). 2 residues coordinate L-tyrosine: Tyr169 and Gln173. The 'KMSKS' region motif lies at 229-233 (KFGKS). Lys232 contributes to the ATP binding site. The 67-residue stretch at 352–418 (LNLVDMLVTA…GKKKYAVLTY (67 aa)) folds into the S4 RNA-binding domain.

It belongs to the class-I aminoacyl-tRNA synthetase family. TyrS type 1 subfamily. As to quaternary structure, homodimer.

The protein resides in the cytoplasm. It catalyses the reaction tRNA(Tyr) + L-tyrosine + ATP = L-tyrosyl-tRNA(Tyr) + AMP + diphosphate + H(+). In terms of biological role, catalyzes the attachment of tyrosine to tRNA(Tyr) in a two-step reaction: tyrosine is first activated by ATP to form Tyr-AMP and then transferred to the acceptor end of tRNA(Tyr). The polypeptide is Tyrosine--tRNA ligase (Streptococcus pyogenes serotype M6 (strain ATCC BAA-946 / MGAS10394)).